Consider the following 135-residue polypeptide: Nucleoside diphosphate kinase (135 aa).

Residues lysine 11, phenylalanine 59, arginine 87, threonine 93, arginine 104, and asparagine 114 each contribute to the ATP site. Catalysis depends on histidine 117, which acts as the Pros-phosphohistidine intermediate.

It belongs to the NDK family. As to quaternary structure, homotetramer. The cofactor is Mg(2+).

It is found in the cytoplasm. It carries out the reaction a 2'-deoxyribonucleoside 5'-diphosphate + ATP = a 2'-deoxyribonucleoside 5'-triphosphate + ADP. The enzyme catalyses a ribonucleoside 5'-diphosphate + ATP = a ribonucleoside 5'-triphosphate + ADP. Functionally, major role in the synthesis of nucleoside triphosphates other than ATP. The ATP gamma phosphate is transferred to the NDP beta phosphate via a ping-pong mechanism, using a phosphorylated active-site intermediate. In Marinomonas sp. (strain MWYL1), this protein is Nucleoside diphosphate kinase.